Reading from the N-terminus, the 137-residue chain is Nucleoside diphosphate kinase (137 aa).

ATP contacts are provided by lysine 10, phenylalanine 59, arginine 87, threonine 93, arginine 104, and asparagine 114. Histidine 117 functions as the Pros-phosphohistidine intermediate in the catalytic mechanism.

Belongs to the NDK family. In terms of assembly, homotetramer. Requires Mg(2+) as cofactor.

Its subcellular location is the cytoplasm. It carries out the reaction a 2'-deoxyribonucleoside 5'-diphosphate + ATP = a 2'-deoxyribonucleoside 5'-triphosphate + ADP. The catalysed reaction is a ribonucleoside 5'-diphosphate + ATP = a ribonucleoside 5'-triphosphate + ADP. In terms of biological role, major role in the synthesis of nucleoside triphosphates other than ATP. The ATP gamma phosphate is transferred to the NDP beta phosphate via a ping-pong mechanism, using a phosphorylated active-site intermediate. This chain is Nucleoside diphosphate kinase, found in Streptomyces griseus subsp. griseus (strain JCM 4626 / CBS 651.72 / NBRC 13350 / KCC S-0626 / ISP 5235).